We begin with the raw amino-acid sequence, 474 residues long: PTS system N-acetylmuramic acid-specific EIIBC component (474 aa).

Residues 1–89 (MAKEISSELL…SELLGEAPVQ (89 aa)) enclose the PTS EIIB type-1 domain. The Cytoplasmic segment spans residues 1–123 (MAKEISSELL…LAKFATIFTP (123 aa)). Residue cysteine 29 is the Phosphocysteine intermediate; for EIIB activity of the active site. Positions 115–474 (AKFATIFTPL…LFGCRNVNLD (360 aa)) constitute a PTS EIIC type-1 domain. Residues 124–144 (LIPGFIAAGLLLGIATLIATV) traverse the membrane as a helical segment. The Periplasmic portion of the chain corresponds to 145 to 157 (MHVPADAQGTLPD). A helical transmembrane segment spans residues 158 to 178 (ALNFMKVFSKGLFTFLVILVG). Over 179-180 (YN) the chain is Cytoplasmic. The helical transmembrane segment at 181-201 (AAQAFGGTGVNGAIIAALFLL) threads the bilayer. Residues 202 to 217 (GYNPAATTGYYAGFHD) are Periplasmic-facing. The chain crosses the membrane as a helical span at residues 218 to 238 (FFGLPIDPRGNIIGVLIAAWA). Over 239 to 260 (CARIEGMVRRFMPDDLDMLLTS) the chain is Cytoplasmic. A helical transmembrane segment spans residues 261 to 281 (LITLLITATLAYLIIMPLGGW). Over 282–301 (LFEGMSWLFMHLNSNPLGCA) the chain is Periplasmic. Residues 302–322 (VLAGLFLIAVVFGVHQGFIPV) traverse the membrane as a helical segment. At 323 to 334 (YLALMDSQGFNS) the chain is on the cytoplasmic side. A helical transmembrane segment spans residues 335–355 (LFPILSMAGAGQVGAALALYW). At 356–368 (RAQPHSALRSQVR) the chain is on the periplasmic side. A helical membrane pass occupies residues 369 to 389 (GAIIPGLLGVGEPLIYGVTLP). Topologically, residues 390–393 (RMKP) are cytoplasmic. The helical transmembrane segment at 394 to 414 (FITACLGGAAGGLFIGLIAWW) threads the bilayer. Topologically, residues 415–440 (GLPMGLNSAFGPSGLVALPLMTSAQG) are periplasmic. A helical membrane pass occupies residues 441–461 (ILPAMAVYAGGILVAWVCGFI). Over 462-474 (FTTLFGCRNVNLD) the chain is Cytoplasmic.

It localises to the cell inner membrane. The catalysed reaction is N-acetyl-beta-D-muramate(out) + N(pros)-phospho-L-histidyl-[protein] = N-acetyl-beta-D-muramate 6-phosphate(in) + L-histidyl-[protein]. In terms of biological role, the phosphoenolpyruvate-dependent sugar phosphotransferase system (sugar PTS), a major carbohydrate active transport system, catalyzes the phosphorylation of incoming sugar substrates concomitantly with their translocation across the cell membrane. This system is involved in N-acetylmuramic acid (MurNAc) transport, yielding cytoplasmic MurNAc-6-P. Is also able to take up anhydro-N-acetylmuramic acid (anhMurNAc), but cannot phosphorylate the carbon 6, probably because of the 1,6-anhydro ring. The polypeptide is PTS system N-acetylmuramic acid-specific EIIBC component (murP) (Escherichia coli O157:H7).